Consider the following 701-residue polypeptide: Elongation factor G (701 aa).

A tr-type G domain is found at 11 to 287 (NKVRNIGIMA…AVVDYLPSPL (277 aa)). GTP is bound by residues 20 to 27 (AHIDAGKT), 84 to 88 (DTPGH), and 138 to 141 (NKMD).

It belongs to the TRAFAC class translation factor GTPase superfamily. Classic translation factor GTPase family. EF-G/EF-2 subfamily.

The protein localises to the cytoplasm. Catalyzes the GTP-dependent ribosomal translocation step during translation elongation. During this step, the ribosome changes from the pre-translocational (PRE) to the post-translocational (POST) state as the newly formed A-site-bound peptidyl-tRNA and P-site-bound deacylated tRNA move to the P and E sites, respectively. Catalyzes the coordinated movement of the two tRNA molecules, the mRNA and conformational changes in the ribosome. This chain is Elongation factor G, found in Mycobacterium sp. (strain JLS).